A 93-amino-acid polypeptide reads, in one-letter code: UPF0298 protein GWCH70_0997 (93 aa).

This sequence belongs to the UPF0298 family.

Its subcellular location is the cytoplasm. The chain is UPF0298 protein GWCH70_0997 from Geobacillus sp. (strain WCH70).